Consider the following 483-residue polypeptide: Centrosomal protein cep57l1 (483 aa).

Positions 94–228 (EHKKVLESEK…AQVQTSLEVN (135 aa)) form a coiled coil. 3 disordered regions span residues 237 to 261 (AQNS…SKEP), 303 to 325 (PQVS…GGSR), and 416 to 460 (KEQP…SKAS). Over residues 243–252 (RKVKKKKQSK) the composition is skewed to basic residues. Residues 375-418 (EDLERELDYVVKQMEIKSDQIMKLKRHQLNVNKLKKTAKLLKEQ) adopt a coiled-coil conformation. Over residues 420–435 (RPTSVTKLAADKQNTG) the composition is skewed to polar residues.

This sequence belongs to the translokin family. Interacts with clip1, mis12, ndc80 and zwint. Interacts with gamma-tubulin.

The protein resides in the cytoplasm. It localises to the cytoskeleton. It is found in the microtubule organizing center. The protein localises to the centrosome. Its subcellular location is the chromosome. The protein resides in the centromere. It localises to the kinetochore. It is found in the spindle. Required for spindle microtubule attachment to both kinetochores and centrosomes. Also functions to tether minus-ends of spindle microtubules to centrosomes. May act by forming ring-like structures around microtubules, or by serving as a cross-linker or scaffold at the attachment site. This Xenopus tropicalis (Western clawed frog) protein is Centrosomal protein cep57l1 (cep57l1).